The following is a 436-amino-acid chain: Prenyltransferase nscD (436 aa).

It belongs to the tryptophan dimethylallyltransferase family.

The protein operates within secondary metabolite biosynthesis. Prenyltransferase; part of the gene cluster that mediates the biosynthesis of neosartoricin B, a prenylated anthracenone that probably exhibits T-cell antiproliferative activity, suggestive of a physiological role as an immunosuppressive agent. The non-reducing polyketide synthase nscA probably synthesizes and cyclizes the decaketide backbone. The hydrolase nscB then mediates the product release through hydrolysis followed by spontaneous decarboxylation. The prenyltransferase nscD catalyzes the addition of the dimethylallyl group to the aromatic C5. The FAD-dependent monooxygenase nscC is then responsible for the stereospecific hydroxylation at C2. Neosartoricin B can be converted into two additional compounds neosartoricins C and D. Neosartoricin C is a spirocyclic compound that is cyclized through the attack of C3 hydroxyl on C14, followed by dehydration. On the other hand, neosartoricin D is a further cyclized compound in which attack of C2 on C14 in neosartoricin C results in the formation of the acetal-containing dioxabicyclo-octanone ring. Both of these compounds are novel and possibly represent related metabolites of the gene cluster. This Trichophyton tonsurans (strain CBS 112818) (Scalp ringworm fungus) protein is Prenyltransferase nscD.